Consider the following 697-residue polypeptide: Elongation factor G (697 aa).

The tr-type G domain occupies 10-290 (THFRNIGIAA…AVVDYLPSPL (281 aa)). Residues 19–26 (AHIDAGKT), 89–93 (DTPGH), and 143–146 (NKMD) each bind GTP.

This sequence belongs to the TRAFAC class translation factor GTPase superfamily. Classic translation factor GTPase family. EF-G/EF-2 subfamily.

Its subcellular location is the cytoplasm. Its function is as follows. Catalyzes the GTP-dependent ribosomal translocation step during translation elongation. During this step, the ribosome changes from the pre-translocational (PRE) to the post-translocational (POST) state as the newly formed A-site-bound peptidyl-tRNA and P-site-bound deacylated tRNA move to the P and E sites, respectively. Catalyzes the coordinated movement of the two tRNA molecules, the mRNA and conformational changes in the ribosome. The chain is Elongation factor G from Deinococcus deserti (strain DSM 17065 / CIP 109153 / LMG 22923 / VCD115).